The sequence spans 278 residues: Tetraspanin-13 (278 aa).

Residues 1 to 25 are Cytoplasmic-facing; it reads MARDKEDQNNENPSIVQNMSFPFNT. A helical transmembrane segment spans residues 26 to 46; it reads IFLISSAIFLVTAAFWFVAVM. Residues 47-62 are Extracellular-facing; that stretch reads TLHYRTDECNRFVTTP. Residues 63 to 83 traverse the membrane as a helical segment; it reads GIFISFSLLAMSLTGFYAAYF. The Cytoplasmic portion of the chain corresponds to 84 to 92; sequence KSDCLFRIH. The chain crosses the membrane as a helical span at residues 93–113; it reads FFIFFLWMFVVVSKAIFVIFL. The Extracellular segment spans residues 114–249; sequence HKETNPRLFP…DVHNTSFSIT (136 aa). N-linked (GlcNAc...) asparagine glycosylation is found at N202, N220, and N243. Residues 250–270 form a helical membrane-spanning segment; the sequence is VNIIHIIFSLCIGMTGWFAWL. Residues 271–278 lie on the Cytoplasmic side of the membrane; that stretch reads RILRESQK.

It belongs to the tetraspanin (TM4SF) family.

Its subcellular location is the membrane. In terms of biological role, may be involved in the regulation of cell differentiation. This Arabidopsis thaliana (Mouse-ear cress) protein is Tetraspanin-13 (TET13).